The following is a 123-amino-acid chain: Nitrogen fixation nifHD1 region GlnB-like protein 2 (123 aa).

This sequence belongs to the P(II) protein family.

In terms of biological role, could be involved in the regulation of nitrogen fixation. This chain is Nitrogen fixation nifHD1 region GlnB-like protein 2 (glnBB), found in Methanosarcina barkeri.